The sequence spans 279 residues: uncharacterized protein (279 aa).

This is an uncharacterized protein from Borreliella burgdorferi (strain ATCC 35210 / DSM 4680 / CIP 102532 / B31) (Borrelia burgdorferi).